A 503-amino-acid chain; its full sequence is Glutamate--tRNA ligase (503 aa).

The 'HIGH' region motif lies at 15–25; it reads PSPTGYLHVGG. The 'KMSKS' region signature appears at 262–266; that stretch reads KLSKR. Lys265 contacts ATP.

Belongs to the class-I aminoacyl-tRNA synthetase family. Glutamate--tRNA ligase type 1 subfamily. As to quaternary structure, monomer.

It localises to the cytoplasm. It carries out the reaction tRNA(Glu) + L-glutamate + ATP = L-glutamyl-tRNA(Glu) + AMP + diphosphate. In terms of biological role, catalyzes the attachment of glutamate to tRNA(Glu) in a two-step reaction: glutamate is first activated by ATP to form Glu-AMP and then transferred to the acceptor end of tRNA(Glu). The chain is Glutamate--tRNA ligase from Prosthecochloris aestuarii (strain DSM 271 / SK 413).